The primary structure comprises 198 residues: RNA 2',3'-cyclic phosphodiesterase (198 aa).

The active-site Proton donor is the His-39. 2 consecutive short sequence motifs (HXTX) follow at residues 39-42 (HLTL) and 130-133 (HITL). His-130 (proton acceptor) is an active-site residue.

The protein belongs to the 2H phosphoesterase superfamily. ThpR family.

The enzyme catalyses a 3'-end 2',3'-cyclophospho-ribonucleotide-RNA + H2O = a 3'-end 2'-phospho-ribonucleotide-RNA + H(+). In terms of biological role, hydrolyzes RNA 2',3'-cyclic phosphodiester to an RNA 2'-phosphomonoester. The sequence is that of RNA 2',3'-cyclic phosphodiesterase from Thermus thermophilus (strain ATCC 27634 / DSM 579 / HB8).